Here is a 473-residue protein sequence, read N- to C-terminus: Photosystem II CP43 reaction center protein (473 aa).

Positions 1-14 are excised as a propeptide; it reads MKTLYSLRRFYPVE. Position 15 is an N-acetylthreonine (Thr-15). Thr-15 is modified (phosphothreonine). 5 helical membrane passes run 69–93, 134–155, 178–200, 255–275, and 291–312; these read LFEV…PHLA, LLGP…KDRN, KALY…RRIT, KPFA…LSYS, and WFNN…ASQA. Residue Glu-367 participates in [CaMn4O5] cluster binding. The chain crosses the membrane as a helical span at residues 447–471; that stretch reads RARAAAAGFEKGIDRDFEPVLSMTP.

It belongs to the PsbB/PsbC family. PsbC subfamily. In terms of assembly, PSII is composed of 1 copy each of membrane proteins PsbA, PsbB, PsbC, PsbD, PsbE, PsbF, PsbH, PsbI, PsbJ, PsbK, PsbL, PsbM, PsbT, PsbX, PsbY, PsbZ, Psb30/Ycf12, at least 3 peripheral proteins of the oxygen-evolving complex and a large number of cofactors. It forms dimeric complexes. Binds multiple chlorophylls and provides some of the ligands for the Ca-4Mn-5O cluster of the oxygen-evolving complex. It may also provide a ligand for a Cl- that is required for oxygen evolution. PSII binds additional chlorophylls, carotenoids and specific lipids. serves as cofactor.

Its subcellular location is the plastid. The protein resides in the chloroplast thylakoid membrane. One of the components of the core complex of photosystem II (PSII). It binds chlorophyll and helps catalyze the primary light-induced photochemical processes of PSII. PSII is a light-driven water:plastoquinone oxidoreductase, using light energy to abstract electrons from H(2)O, generating O(2) and a proton gradient subsequently used for ATP formation. This is Photosystem II CP43 reaction center protein from Illicium oligandrum (Star anise).